Consider the following 193-residue polypeptide: Ribonuclease HII (193 aa).

Residues C15 to C193 enclose the RNase H type-2 domain. Residues D21, E22, and D112 each contribute to the a divalent metal cation site.

The protein belongs to the RNase HII family. Mn(2+) serves as cofactor. Mg(2+) is required as a cofactor.

It localises to the cytoplasm. It carries out the reaction Endonucleolytic cleavage to 5'-phosphomonoester.. Endonuclease that specifically degrades the RNA of RNA-DNA hybrids. The sequence is that of Ribonuclease HII from Rickettsia conorii (strain ATCC VR-613 / Malish 7).